A 570-amino-acid polypeptide reads, in one-letter code: MLSRLMSGSSRSLEREYSCTVRLLDDSEYTCTIQRDAKGQYLFDLLCHHLNLLEKDYFGIRFVDPDKQRHWLEFTKSVVKQLRSQPPFTMCFRVKFYPADPAALKEEITRYLVFLQIKRDLYHGRLLCKTSDAALLAAYILQAEIGDYDSGKHPEGYSSKFQFFPKHSEKLERKIAEIHKTELSGQTPATSELNFLRKAQTLETYGVDPHPCKDVSGNAAFLAFTPFGFVVLQGNKRVHFIKWNEVTKLKFEGKTFYLYVSQKEEKKIILTYFAPTPEACKHLWKCGIENQAFYKLEKSSQVRTVSSSNLFFKGSRFRYSGRVAKEVMESSAKIKREPPEIHRAGMVPSRSCPSITHGPRLSSVPRTRRRAVHISIMEGLESLRDSAHSTPVRSTSHGDTFLPHVRSSRTDSNERVAVIADEAYSPADSVLPTPVAEHSLELMLLSRQINGATCSIEEEKESEASTPTATEVEALGGELRALCQGHSGPEEEQVNKFVLSVLRLLLVTMGLLFVLLLLLIILTESDLDIAFFRDIRQTPEFEQFHYQYFCPLRRWFACKIRSVVSLLIDT.

The FERM domain occupies 17 to 298 (YSCTVRLLDD…ENQAFYKLEK (282 aa)). An interaction with ROCK1 region spans residues 308 to 353 (SNLFFKGSRFRYSGRVAKEVMESSAKIKREPPEIHRAGMVPSRSCP). The segment at 344–367 (AGMVPSRSCPSITHGPRLSSVPRT) is disordered. Ser-375 is modified (phosphoserine). The tract at residues 385 to 407 (DSAHSTPVRSTSHGDTFLPHVRS) is disordered. Positions 388-398 (HSTPVRSTSHG) are enriched in polar residues. Residues 504-524 (LLLVTMGLLFVLLLLLIILTE) traverse the membrane as a helical segment.

In terms of assembly, interacts with CTNND1. Interacts with ITGB5 (via cytoplasmic domain) and ROCK1.

It localises to the membrane. Its subcellular location is the cell junction. The protein localises to the adherens junction. In terms of biological role, may be involved in regulation of cell migration. May regulate cell-matrix interactions via its interaction with ITGB5 and modifying ITGB5 cytoplasmic tail interactions such as with FERMT2 and TLN1. May regulate ROCK1 kinase activity possibly involved in regulation of actin stress fiber formation. This chain is FERM domain-containing protein 5 (FRMD5), found in Homo sapiens (Human).